The sequence spans 256 residues: MVIILLLLLLSFLDPSLEESLAPRLTRTPRAPCARGQACDPRQRRDAGGRGGVYEHLGGAPRRRKLYCATKYHLQIHPNGKIDGSLEENNPLSILEITAVDVGVVAIKGLFSGRYLAMNEKGRLYASEVFNRECEFLERIHELGYNTYASRHHATTQPPPTGSGIGGSKRRASSKRQWYVSINGKGRPRRGFKTRSTDKASLFLPRVLANKDHEMVRKLRESQRHHTGSHRAPVGRAERRRRRHRGSKGHNRRADI.

Residues 1-18 form the signal peptide; that stretch reads MVIILLLLLLSFLDPSLE. 3 disordered regions span residues 31–54, 151–176, and 219–256; these read APCA…GGVY, RHHA…SSKR, and LRES…RADI. Residues 238 to 256 are compositionally biased toward basic residues; it reads ERRRRRHRGSKGHNRRADI.

The protein belongs to the heparin-binding growth factors family.

The protein localises to the secreted. In terms of biological role, plays an important role in the regulation of embryonic development, cell proliferation, and cell differentiation. The polypeptide is Fibroblast growth factor 3 (fgf3) (Danio rerio (Zebrafish)).